A 781-amino-acid chain; its full sequence is Beta-mannosyltransferase 4 (781 aa).

The Cytoplasmic portion of the chain corresponds to 1–17 (MTKSYMPLFRSPRQFKK). The helical transmembrane segment at 18 to 38 (IYFILIPLILAVIILHVFFDG) threads the bilayer. The Extracellular segment spans residues 39-781 (FNKISEYSPT…EKEDDDDIEV (743 aa)). Positions 640–733 (KLGDSEAAIK…AKDEDKNEDE (94 aa)) form a coiled coil. Basic and acidic residues-rich tracts occupy residues 663–728 (KAEK…KDED) and 736–750 (KEKNDESGLTEKSEV). The segment at 663–781 (KAEKEKAEKE…EKEDDDDIEV (119 aa)) is disordered. Residues 751–781 (EENGENTNEGGEDDGDGDGEEEKEDDDDIEV) are compositionally biased toward acidic residues.

It belongs to the BMT family.

The protein localises to the membrane. In terms of biological role, beta-mannosyltransferase involved in cell wall biosynthesis. Required for the elongation of beta-mannose chains on the acid-labile fraction of cell wall phosphopeptidomannan. This chain is Beta-mannosyltransferase 4 (BMT4), found in Candida albicans (strain SC5314 / ATCC MYA-2876) (Yeast).